The chain runs to 318 residues: NADH-ubiquinone oxidoreductase chain 1 (318 aa).

8 helical membrane-spanning segments follow: residues F2–L22, I68–P88, L100–G120, L146–I166, H171–A191, L222–F242, E253–V273, and L294–I314.

It belongs to the complex I subunit 1 family.

It is found in the mitochondrion inner membrane. The enzyme catalyses a ubiquinone + NADH + 5 H(+)(in) = a ubiquinol + NAD(+) + 4 H(+)(out). Its function is as follows. Core subunit of the mitochondrial membrane respiratory chain NADH dehydrogenase (Complex I) that is believed to belong to the minimal assembly required for catalysis. Complex I functions in the transfer of electrons from NADH to the respiratory chain. The immediate electron acceptor for the enzyme is believed to be ubiquinone. The protein is NADH-ubiquinone oxidoreductase chain 1 (MT-ND1) of Coelops frithii (East Asian tailless leaf-nosed bat).